The primary structure comprises 69 residues: Small ribosomal subunit protein bS21 (69 aa).

The tract at residues I49 to A69 is disordered.

This sequence belongs to the bacterial ribosomal protein bS21 family.

In Leptospira borgpetersenii serovar Hardjo-bovis (strain JB197), this protein is Small ribosomal subunit protein bS21.